Consider the following 337-residue polypeptide: Phenylalanine--tRNA ligase alpha subunit (337 aa).

Mg(2+) is bound at residue Glu-258.

The protein belongs to the class-II aminoacyl-tRNA synthetase family. Phe-tRNA synthetase alpha subunit type 1 subfamily. In terms of assembly, tetramer of two alpha and two beta subunits. It depends on Mg(2+) as a cofactor.

It is found in the cytoplasm. The catalysed reaction is tRNA(Phe) + L-phenylalanine + ATP = L-phenylalanyl-tRNA(Phe) + AMP + diphosphate + H(+). This Burkholderia vietnamiensis (strain G4 / LMG 22486) (Burkholderia cepacia (strain R1808)) protein is Phenylalanine--tRNA ligase alpha subunit.